Here is a 402-residue protein sequence, read N- to C-terminus: Argininosuccinate synthase (402 aa).

Residues 10 to 18 (AYSGGLDTS) and alanine 37 contribute to the ATP site. The L-citrulline site is built by tyrosine 88 and serine 93. An ATP-binding site is contributed by glycine 118. L-aspartate contacts are provided by threonine 120, asparagine 124, and aspartate 125. An L-citrulline-binding site is contributed by asparagine 124. Arginine 128, serine 179, serine 188, glutamate 264, and tyrosine 276 together coordinate L-citrulline.

This sequence belongs to the argininosuccinate synthase family. Type 1 subfamily. In terms of assembly, homotetramer.

Its subcellular location is the cytoplasm. The enzyme catalyses L-citrulline + L-aspartate + ATP = 2-(N(omega)-L-arginino)succinate + AMP + diphosphate + H(+). The protein operates within amino-acid biosynthesis; L-arginine biosynthesis; L-arginine from L-ornithine and carbamoyl phosphate: step 2/3. The sequence is that of Argininosuccinate synthase from Alkalilimnicola ehrlichii (strain ATCC BAA-1101 / DSM 17681 / MLHE-1).